The sequence spans 251 residues: MVEDSQETTHFGFQTVAKEQKADMVAHVFHSVAAKYDVMNDLMSFGIHRLWKRFTIDCSGVRRGQTVLDLAGGTGDLTAKFSRLVGETGRVMLADINDSMLKMGREKLRNIGIVGNVEYVQANAEALPFADNTFDCITISFGLRNVTDKEKALRSMYRVLKPGGRLLVLEFSKPIIEPLSKAYDAYSFHILPKVGELVAKDGDSYRYLAESIRMHPDQETLKGMMQDAGFENVDYYNLTAGIVALHRGYKF.

S-adenosyl-L-methionine contacts are provided by residues Thr-74, Asp-95, 123–124 (NA), and Ser-140.

Belongs to the class I-like SAM-binding methyltransferase superfamily. MenG/UbiE family.

It catalyses the reaction a 2-demethylmenaquinol + S-adenosyl-L-methionine = a menaquinol + S-adenosyl-L-homocysteine + H(+). The enzyme catalyses a 2-methoxy-6-(all-trans-polyprenyl)benzene-1,4-diol + S-adenosyl-L-methionine = a 5-methoxy-2-methyl-3-(all-trans-polyprenyl)benzene-1,4-diol + S-adenosyl-L-homocysteine + H(+). Its pathway is quinol/quinone metabolism; menaquinone biosynthesis; menaquinol from 1,4-dihydroxy-2-naphthoate: step 2/2. It participates in cofactor biosynthesis; ubiquinone biosynthesis. In terms of biological role, methyltransferase required for the conversion of demethylmenaquinol (DMKH2) to menaquinol (MKH2) and the conversion of 2-polyprenyl-6-methoxy-1,4-benzoquinol (DDMQH2) to 2-polyprenyl-3-methyl-6-methoxy-1,4-benzoquinol (DMQH2). The polypeptide is Ubiquinone/menaquinone biosynthesis C-methyltransferase UbiE (Klebsiella pneumoniae subsp. pneumoniae (strain ATCC 700721 / MGH 78578)).